Reading from the N-terminus, the 222-residue chain is uncharacterized protein (222 aa).

Helical transmembrane passes span 26 to 46 (YGLL…SQQM), 48 to 68 (LPYP…FLTV), 75 to 95 (WGLV…GPIL), 107 to 127 (VITS…AYVL), 139 to 159 (FITA…FFQI), 166 to 186 (ISAG…SAII), and 198 to 218 (ISLY…FGIA).

It belongs to the BI1 family.

Its subcellular location is the cell membrane. This is an uncharacterized protein from Pseudomonas aeruginosa (strain ATCC 15692 / DSM 22644 / CIP 104116 / JCM 14847 / LMG 12228 / 1C / PRS 101 / PAO1).